The primary structure comprises 364 residues: Transcription elongation factor, mitochondrial (364 aa).

The transit peptide at 1 to 39 directs the protein to the mitochondrion; the sequence is MAWRTNLACLIKAGGRRWFPVPEYSSLPPVLNNTCSVRK.

It belongs to the TEFM family. Interacts with POLRMT.

Its subcellular location is the mitochondrion matrix. The protein resides in the mitochondrion nucleoid. Transcription elongation factor which increases mitochondrial RNA polymerase processivity. Regulates transcription of the mitochondrial genome, including genes important for the oxidative phosphorylation machinery. This chain is Transcription elongation factor, mitochondrial (Tefm), found in Mus musculus (Mouse).